We begin with the raw amino-acid sequence, 86 residues long: Small ribosomal subunit protein bS16 (86 aa).

It belongs to the bacterial ribosomal protein bS16 family.

This Myxococcus xanthus (strain DK1622) protein is Small ribosomal subunit protein bS16.